A 435-amino-acid chain; its full sequence is Acetyltransferase atnC (435 aa).

3 helical membrane-spanning segments follow: residues 10–30 (AFAN…FLII), 40–60 (YFGI…APTL), and 68–88 (SFLA…LLIL). Asn-203 carries N-linked (GlcNAc...) asparagine glycosylation. 3 consecutive transmembrane segments (helical) span residues 306–326 (FLVF…MGLS), 333–353 (IPYF…QAFY), and 370–390 (VVGF…YMFP). A glycan (N-linked (GlcNAc...) asparagine) is linked at Asn-406. The chain crosses the membrane as a helical span at residues 407-427 (LTEVIGMPMMWGLLGTFGMLV).

It belongs to the wax synthase family.

Its subcellular location is the membrane. The protein operates within secondary metabolite biosynthesis; terpenoid biosynthesis. Its function is as follows. Acetyltransferase; part of the gene cluster that mediates the biosynthesis of the meroterpenoids arthripenoids. The pathway begins with the HR-PKS atnH that catalyzes two chain-extension steps to form a reduced triketide, which then primes the SAT domain in the NR-PKS atnG to initiate three more cycles of extension to give a linear hexaketide corresponding to the polyketide part of arthripenoids. The FAD-dependent monooxygenase atnJ then performs an oxidative decarboxylation at C11 of the atnH/atnG product, via an electrophilic aromatic hydroxylation with concomitant ipso-decarboxylation. The membrane-bound polyprenyl transferase atnF then introduces a farnesyl group before the FAD-dependent monooxygenase atnK functions as the first epoxidase on terminal C12'-C13' olefin, followed by a second epoxidation on C7'-C8' catalyzed by atnA. The terpene cyclase/mutase atnI then initiates the sequential tricyclic ring formation through protonation of the terminal epoxide and catalyzes the regioselective and stereoselective 6/6/6-tricyclic ring formation. The cytochrome P450 monooxygenase atnM is responsible for hydroxylating both C1' and C10'. The next steps may involve ketoreduction and acetyl transfer by the ketoreductase atnB and the acetyltransferase atnC, and lead to the production of arthripenoid B, the final biosynthetic product of the atn cluster. The hydroquinone moiety in arthripenoid B is prone to undergo spontaneous oxidation to afford a benzoquinone compound, a key intermediate for generating structure diversity. For instance, addition of a cysteine followed by ring contraction gives arthripenoid A, tautomerization gives the main product arthripenoid C, addition of a molecular of water or amine affords arthripenoid D or E, respectively, and loss of one water forms arthripenoid F. The polypeptide is Acetyltransferase atnC (Arthrinium sp).